A 1051-amino-acid chain; its full sequence is Anucleate primary sterigmata protein B (1051 aa).

2 coiled-coil regions span residues 10-200 (IDRL…YAIA) and 239-285 (STLV…ELKL). Over residues 58 to 90 (KDNQGLKRKIRDLEKQLKDQQSDKESMLNHDPE) the composition is skewed to basic and acidic residues. 2 disordered regions span residues 58-100 (KDNQ…DRDH) and 141-160 (LKSL…REER). Residues 294 to 303 (AGDSILDRSA) show a composition bias toward basic and acidic residues. Disordered regions lie at residues 294 to 329 (AGDS…AERE), 877 to 902 (NHPR…LAER), 909 to 928 (NTAA…QMTN), and 984 to 1051 (EERD…DIEV). The span at 309–321 (RPSSSISDRTGQS) shows a compositional bias: polar residues. Coiled coils occupy residues 325 to 743 (DAER…RNSM) and 787 to 878 (RNLL…LQNH). Polar residues-rich tracts occupy residues 877–897 (NHPR…SSTI) and 916–928 (ARSS…QMTN). A coiled-coil region spans residues 950-1004 (NQEVWIKRLHELERRLKAEREARLLDRNGARRRLEERDAENKRLRAQLDRQRLRQ). Basic and acidic residues-rich tracts occupy residues 984–1001 (EERD…DRQR) and 1028–1040 (EGYR…HSSS).

The protein localises to the cytoplasm. Functionally, involved in regulation of nuclear migration. May be involved in regulating nuclear positioning. This Emericella nidulans (strain FGSC A4 / ATCC 38163 / CBS 112.46 / NRRL 194 / M139) (Aspergillus nidulans) protein is Anucleate primary sterigmata protein B (apsB).